A 338-amino-acid polypeptide reads, in one-letter code: Nicotinate-nucleotide--dimethylbenzimidazole phosphoribosyltransferase (338 aa).

The active-site Proton acceptor is the Glu-305.

Belongs to the CobT family.

It carries out the reaction 5,6-dimethylbenzimidazole + nicotinate beta-D-ribonucleotide = alpha-ribazole 5'-phosphate + nicotinate + H(+). It participates in nucleoside biosynthesis; alpha-ribazole biosynthesis; alpha-ribazole from 5,6-dimethylbenzimidazole: step 1/2. Its function is as follows. Catalyzes the synthesis of alpha-ribazole-5'-phosphate from nicotinate mononucleotide (NAMN) and 5,6-dimethylbenzimidazole (DMB). This Rhizobium rhizogenes (strain K84 / ATCC BAA-868) (Agrobacterium radiobacter) protein is Nicotinate-nucleotide--dimethylbenzimidazole phosphoribosyltransferase.